We begin with the raw amino-acid sequence, 128 residues long: Large ribosomal subunit protein bL17 (128 aa).

Belongs to the bacterial ribosomal protein bL17 family. Part of the 50S ribosomal subunit. Contacts protein L32.

The polypeptide is Large ribosomal subunit protein bL17 (Streptococcus mutans serotype c (strain ATCC 700610 / UA159)).